We begin with the raw amino-acid sequence, 237 residues long: tRNA(His) guanylyltransferase (237 aa).

3 residues coordinate Mg(2+): Asp29, Gly30, and Asp77. GTP is bound by residues 29-34 and 76-77; these read DGKKFH and SD.

The protein belongs to the tRNA(His) guanylyltransferase family. Mg(2+) serves as cofactor.

It carries out the reaction a 5'-end ribonucleotide-tRNA(His) + GTP + ATP + H2O = a 5'-end phospho-guanosine-ribonucleotide-tRNA(His) + AMP + 2 diphosphate + H(+). Its function is as follows. Adds a GMP to the 5'-end of tRNA(His) after transcription and RNase P cleavage. In Candida glabrata (strain ATCC 2001 / BCRC 20586 / JCM 3761 / NBRC 0622 / NRRL Y-65 / CBS 138) (Yeast), this protein is tRNA(His) guanylyltransferase (THG1).